The chain runs to 153 residues: Interleukin-4 (153 aa).

A signal peptide spans 1-24; sequence MGLTSQLLPPLFFLLACAGNFAHG. 3 disulfide bridges follow: Cys-27-Cys-151, Cys-48-Cys-89, and Cys-70-Cys-123. N-linked (GlcNAc...) asparagine glycosylation occurs at Asn-62. Asn-129 is a glycosylation site (N-linked (GlcNAc...) asparagine).

It belongs to the IL-4/IL-13 family.

It is found in the secreted. Its function is as follows. Participates in at least several B-cell activation processes as well as of other cell types. It is a costimulator of DNA-synthesis. It induces the expression of class II MHC molecules on resting B-cells. It enhances both secretion and cell surface expression of IgE and IgG1. It also regulates the expression of the low affinity Fc receptor for IgE (CD23) on both lymphocytes and monocytes. Positively regulates IL31RA expression in macrophages. Stimulates autophagy in dendritic cells by interfering with mTORC1 signaling and through the induction of RUFY4. This is Interleukin-4 (IL4) from Macaca mulatta (Rhesus macaque).